We begin with the raw amino-acid sequence, 481 residues long: MDNHNEVPMSMSVPWASAASVTCLSLDAKCHRPCPSSISASASASACASDSAAIATTKLRHIAYTQRCSSRLTMLMTVLLLLLPLSFTPAHSCGPGRGLGRRRERNLYPLVLKQTIPNLSEYQTGASGPLEGEIKRDSPKFKDLVPNYNRDILFRDEEGTGADRLMTKRCKEKLNVLAYSVMNEWPGVRLLVTESWDEDHQHGQESLHYEGRAVTIATSDREPSRYGMLARLAVEAGFDWVSYVSRRHIYCSVKSDSSISSHVHGCFTPESTALLESGITKPLSEISIGDRVLSMGSNGQPVYSEVILFMDRNLEQMQNFVELHTDGGAVLTVTPAHLISVWHPERQQLDYVFADRVEELNYVLVRDPQTGELRPQRVVRVGSVRSKGVVAPLTREGTIVVNSVAASCYAVIDSQSLAHWGLAPMRILAMLQSWMPAKDQLRSSQTEGVVSRAEQQNGIHWYANALYKVKDYVLPKSWRHD.

Cys93 is lipidated: N-palmitoyl cysteine. The Ca(2+) site is built by Glu157, Glu158, Asp163, Thr193, Glu194, Asp197, and Asp199. A lipid anchor (Cholesterol glycine ester) is attached at Gly265.

This sequence belongs to the hedgehog family. In terms of assembly, interacts with shf. Post-translationally, the C-terminal part of the hedgehog protein precursor displays an autoproteolysis activity that results in the cleavage of the full-length protein into two parts (N-product and C-product). In addition, the C-terminal part displays a cholesterol transferase activity that results by the covalent attachment of a cholesterol moiety to the C-terminal of the newly generated N-product. The N-product is the active species in both local and long-range signaling, whereas the C-product has no signaling activity. In terms of processing, cholesterylation is required for N-product targeting to lipid rafts and multimerization. N-palmitoylation by Rasp of the hedgehog N-product, within the secretory pathway, is required for the embryonic and larval patterning activities of the hedgehog signal.

The protein localises to the nucleus. Its subcellular location is the cytoplasm. It localises to the cell membrane. It catalyses the reaction glycyl-L-cysteinyl-[protein] + cholesterol + H(+) = [protein]-C-terminal glycyl cholesterol ester + N-terminal L-cysteinyl-[protein]. The C-terminal part of the hedgehog protein precursor displays an autoproteolysis activity that results in the cleavage of the full-length protein into two parts (N-product and C-product). In addition, the C-terminal part displays a cholesterol transferase activity that results by the covalent attachment of a cholesterol moiety to the C-terminal of the newly generated N-product. Once cleaved, the C-product has no signaling activity and diffuses from the cell. In terms of biological role, the dually lipidated hedgehog protein N-product is a morphogen which is essential for a variety of patterning events during development. Establishes the anterior-posterior axis of the embryonic segments and patterns the larval imaginal disks. Binds to the patched (ptc) receptor, which functions in association with smoothened (smo), to activate the transcription of target genes wingless (wg), decapentaplegic (dpp) and ptc. In the absence of hh, ptc represses the constitutive signaling activity of smo through fused (fu). Essential component of a signaling pathway which regulates the Duox-dependent gut immune response to bacterial uracil; required to activate Cad99C-dependent endosome formation, norpA-dependent Ca2+ mobilization and p38 MAPK, which are essential steps in the Duox-dependent production of reactive oxygen species (ROS) in response to intestinal bacterial infection. During photoreceptor differentiation, it up-regulates transcription of Ubr3, which in turn promotes the hh-signaling pathway by mediating the ubiquitination and degradation of cos. The sequence is that of Protein hedgehog (hh-1) from Drosophila pseudoobscura pseudoobscura (Fruit fly).